Here is a 117-residue protein sequence, read N- to C-terminus: Large ribosomal subunit protein bL19 (117 aa).

Belongs to the bacterial ribosomal protein bL19 family.

Its function is as follows. This protein is located at the 30S-50S ribosomal subunit interface and may play a role in the structure and function of the aminoacyl-tRNA binding site. The polypeptide is Large ribosomal subunit protein bL19 (Christiangramia forsetii (strain DSM 17595 / CGMCC 1.15422 / KT0803) (Gramella forsetii)).